Consider the following 453-residue polypeptide: Bifunctional protein GlmU (453 aa).

Residues 1–225 form a pyrophosphorylase region; sequence MNIVILAAGT…EWETLGVNSK (225 aa). UDP-N-acetyl-alpha-D-glucosamine contacts are provided by residues 6–9, lysine 20, glutamine 71, 76–77, 98–100, glycine 135, glutamate 150, asparagine 165, and asparagine 223; these read LAAG, GT, and YGD. Aspartate 100 provides a ligand contact to Mg(2+). Asparagine 223 provides a ligand contact to Mg(2+). Positions 226–246 are linker; that stretch reads AQLAELERIHQRTIADALLVD. Residues 247–453 are N-acetyltransferase; that stretch reads GVTLADPARV…GYVRPVKKKS (207 aa). UDP-N-acetyl-alpha-D-glucosamine contacts are provided by arginine 329 and lysine 347. Catalysis depends on histidine 359, which acts as the Proton acceptor. 2 residues coordinate UDP-N-acetyl-alpha-D-glucosamine: tyrosine 362 and asparagine 373. Acetyl-CoA-binding positions include alanine 376, 382–383, serine 401, and alanine 419; that span reads NY.

It in the N-terminal section; belongs to the N-acetylglucosamine-1-phosphate uridyltransferase family. This sequence in the C-terminal section; belongs to the transferase hexapeptide repeat family. Homotrimer. Mg(2+) serves as cofactor.

The protein localises to the cytoplasm. The enzyme catalyses alpha-D-glucosamine 1-phosphate + acetyl-CoA = N-acetyl-alpha-D-glucosamine 1-phosphate + CoA + H(+). It catalyses the reaction N-acetyl-alpha-D-glucosamine 1-phosphate + UTP + H(+) = UDP-N-acetyl-alpha-D-glucosamine + diphosphate. It participates in nucleotide-sugar biosynthesis; UDP-N-acetyl-alpha-D-glucosamine biosynthesis; N-acetyl-alpha-D-glucosamine 1-phosphate from alpha-D-glucosamine 6-phosphate (route II): step 2/2. Its pathway is nucleotide-sugar biosynthesis; UDP-N-acetyl-alpha-D-glucosamine biosynthesis; UDP-N-acetyl-alpha-D-glucosamine from N-acetyl-alpha-D-glucosamine 1-phosphate: step 1/1. It functions in the pathway bacterial outer membrane biogenesis; LPS lipid A biosynthesis. Functionally, catalyzes the last two sequential reactions in the de novo biosynthetic pathway for UDP-N-acetylglucosamine (UDP-GlcNAc). The C-terminal domain catalyzes the transfer of acetyl group from acetyl coenzyme A to glucosamine-1-phosphate (GlcN-1-P) to produce N-acetylglucosamine-1-phosphate (GlcNAc-1-P), which is converted into UDP-GlcNAc by the transfer of uridine 5-monophosphate (from uridine 5-triphosphate), a reaction catalyzed by the N-terminal domain. The protein is Bifunctional protein GlmU of Burkholderia ambifaria (strain MC40-6).